Here is a 248-residue protein sequence, read N- to C-terminus: Probable transcriptional regulatory protein Rsph17025_0577 (248 aa).

The interval 1–21 (MAGHSKWANIQHRKGKQDKLR) is disordered.

This sequence belongs to the TACO1 family.

It localises to the cytoplasm. In Cereibacter sphaeroides (strain ATCC 17025 / ATH 2.4.3) (Rhodobacter sphaeroides), this protein is Probable transcriptional regulatory protein Rsph17025_0577.